The chain runs to 426 residues: Glutamate-1-semialdehyde 2,1-aminomutase (426 aa).

Residue Lys-265 is modified to N6-(pyridoxal phosphate)lysine.

Belongs to the class-III pyridoxal-phosphate-dependent aminotransferase family. HemL subfamily. As to quaternary structure, homodimer. It depends on pyridoxal 5'-phosphate as a cofactor.

Its subcellular location is the cytoplasm. The catalysed reaction is (S)-4-amino-5-oxopentanoate = 5-aminolevulinate. It participates in porphyrin-containing compound metabolism; protoporphyrin-IX biosynthesis; 5-aminolevulinate from L-glutamyl-tRNA(Glu): step 2/2. This is Glutamate-1-semialdehyde 2,1-aminomutase from Salmonella gallinarum (strain 287/91 / NCTC 13346).